Consider the following 264-residue polypeptide: Small ribosomal subunit protein eS1 (264 aa).

The disordered stretch occupies residues 232–264 (HGEGGGAGKPSGDEAGTKVERADGYEPPVQESV). Residues 242–255 (SGDEAGTKVERADG) are compositionally biased toward basic and acidic residues.

This sequence belongs to the eukaryotic ribosomal protein eS1 family. Component of the small ribosomal subunit. Mature ribosomes consist of a small (40S) and a large (60S) subunit. The 40S subunit contains about 33 different proteins and 1 molecule of RNA (18S). The 60S subunit contains about 49 different proteins and 3 molecules of RNA (28S, 5.8S and 5S). Part of the small subunit (SSU) processome, composed of more than 70 proteins and the RNA chaperone small nucleolar RNA (snoRNA) U3.

The protein localises to the cytoplasm. It is found in the nucleus. The protein resides in the nucleolus. Component of the small ribosomal subunit. The ribosome is a large ribonucleoprotein complex responsible for the synthesis of proteins in the cell. Part of the small subunit (SSU) processome, first precursor of the small eukaryotic ribosomal subunit. During the assembly of the SSU processome in the nucleolus, many ribosome biogenesis factors, an RNA chaperone and ribosomal proteins associate with the nascent pre-rRNA and work in concert to generate RNA folding, modifications, rearrangements and cleavage as well as targeted degradation of pre-ribosomal RNA by the RNA exosome. May play a role during erythropoiesis. This is Small ribosomal subunit protein eS1 from Taeniopygia guttata (Zebra finch).